Reading from the N-terminus, the 688-residue chain is Translation initiation factor IF-2 (688 aa).

A disordered region spans residues 54 to 95 (KEKSEKTKEEDDEIETTAKNPIKESTNNKKPNKRDDKNEKVN). The span at 86-95 (KRDDKNEKVN) shows a compositional bias: basic and acidic residues. Positions 187–354 (KRSPIITVMG…MILLSSEILE (168 aa)) constitute a tr-type G domain. The tract at residues 196–203 (GHVDHGKT) is G1. 196-203 (GHVDHGKT) lines the GTP pocket. The interval 221-225 (GITQH) is G2. The G3 stretch occupies residues 242 to 245 (DTPG). Residues 242–246 (DTPGH) and 296–299 (NKID) each bind GTP. The G4 stretch occupies residues 296–299 (NKID). Residues 332–334 (SAH) form a G5 region.

This sequence belongs to the TRAFAC class translation factor GTPase superfamily. Classic translation factor GTPase family. IF-2 subfamily.

Its subcellular location is the cytoplasm. In terms of biological role, one of the essential components for the initiation of protein synthesis. Protects formylmethionyl-tRNA from spontaneous hydrolysis and promotes its binding to the 30S ribosomal subunits. Also involved in the hydrolysis of GTP during the formation of the 70S ribosomal complex. The protein is Translation initiation factor IF-2 of Clostridium botulinum (strain Okra / Type B1).